The following is a 130-amino-acid chain: Small ribosomal subunit protein uS8 (130 aa).

The protein belongs to the universal ribosomal protein uS8 family. Part of the 30S ribosomal subunit. Contacts proteins S5 and S12.

In terms of biological role, one of the primary rRNA binding proteins, it binds directly to 16S rRNA central domain where it helps coordinate assembly of the platform of the 30S subunit. In Aeromonas hydrophila subsp. hydrophila (strain ATCC 7966 / DSM 30187 / BCRC 13018 / CCUG 14551 / JCM 1027 / KCTC 2358 / NCIMB 9240 / NCTC 8049), this protein is Small ribosomal subunit protein uS8.